The primary structure comprises 637 residues: Chaperone protein HtpG (637 aa).

Residues 1 to 345 (MSQQETHGFQ…SNDLPLNVSR (345 aa)) form an a; substrate-binding region. Residues 346-562 (EILQDNHITK…EGEMSTQMIK (217 aa)) form a b region. The c stretch occupies residues 563–637 (LMQAAGQPVP…MNQMLLANLK (75 aa)).

It belongs to the heat shock protein 90 family. Homodimer.

Its subcellular location is the cytoplasm. In terms of biological role, molecular chaperone. Has ATPase activity. The protein is Chaperone protein HtpG of Shewanella oneidensis (strain ATCC 700550 / JCM 31522 / CIP 106686 / LMG 19005 / NCIMB 14063 / MR-1).